The chain runs to 767 residues: Acetylcholinesterase (767 aa).

An N-terminal signal peptide occupies residues 1–19; the sequence is MAPLFLLLLLLLSPSPTSA. Cys-94 and Cys-121 form a disulfide bridge. The active-site Acyl-ester intermediate is the Ser-227. A disulfide bond links Cys-281 and Cys-292. N-linked (GlcNAc...) asparagine glycosylation occurs at Asn-285. Positions 401–504 are disordered; that stretch reads KEGYGVEGDG…YGAKMPPRPH (104 aa). The Charge relay system role is filled by Glu-520. N-linked (GlcNAc...) asparagine glycosylation occurs at Asn-536. A disulfide bond links Cys-595 and Cys-713. Catalysis depends on His-633, which acts as the Charge relay system. Asn-650 and Asn-725 each carry an N-linked (GlcNAc...) asparagine glycan.

Belongs to the type-B carboxylesterase/lipase family. In terms of assembly, oligomer composed of disulfide-linked homodimers.

It localises to the synapse. The protein localises to the secreted. The protein resides in the cell membrane. It catalyses the reaction acetylcholine + H2O = choline + acetate + H(+). In terms of biological role, terminates signal transduction at the neuromuscular junction by rapid hydrolysis of the acetylcholine released into the synaptic cleft. In Gallus gallus (Chicken), this protein is Acetylcholinesterase (ACHE).